A 273-amino-acid polypeptide reads, in one-letter code: Exosome complex component MTR3 (273 aa).

Residues M1–L36 form a disordered region.

The protein belongs to the RNase PH family. Component of the RNA exosome core complex (Exo-9), composed of EXOSC1, EXOSC2, EXOSC3, EXOSC4, EXOSC5, EXOSC6, EXOSC7, EXOSC8 and EXOSC9; within the complex interacts with EXOSC1, EXOSC7 and EXOSC8. The catalytically inactive RNA exosome core complex (Exo-9) associates with the catalytic subunit EXOSC10/RRP6. Exo-9 may associate with DIS3 to form the nucleolar exosome complex, or DIS3L to form the cytoplasmic exosome complex. Exo-9 is formed by a hexameric base ring consisting of the heterodimers EXOSC4-EXOSC9, EXOSC5-EXOSC8 and EXOSC6-EXOSC7, and a cap ring consisting of EXOSC1, EXOSC2 and EXOSC3. The RNA exosome complex associates with cofactors EXOSC10/RRP6, C1D/RRP47, MPHOSPH6/MPP6 and MTREX/MTR4.

Its subcellular location is the cytoplasm. The protein resides in the nucleus. The protein localises to the nucleolus. Functionally, non-catalytic component of the RNA exosome complex which has 3'-&gt;5' exoribonuclease activity and participates in a multitude of cellular RNA processing and degradation events. In the nucleus, the RNA exosome complex is involved in proper maturation of stable RNA species such as rRNA, snRNA and snoRNA, in the elimination of RNA processing by-products and non-coding 'pervasive' transcripts, such as antisense RNA species and promoter-upstream transcripts (PROMPTs), and of mRNAs with processing defects, thereby limiting or excluding their export to the cytoplasm. The RNA exosome may be involved in Ig class switch recombination (CSR) and/or Ig variable region somatic hypermutation (SHM) by targeting AICDA deamination activity to transcribed dsDNA substrates. In the cytoplasm, the RNA exosome complex is involved in general mRNA turnover and specifically degrades inherently unstable mRNAs containing AU-rich elements (AREs) within their 3' untranslated regions, and in RNA surveillance pathways, preventing translation of aberrant mRNAs. It seems to be involved in degradation of histone mRNA. The catalytic inactive RNA exosome core complex of 9 subunits (Exo-9) is proposed to play a pivotal role in the binding and presentation of RNA for ribonucleolysis, and to serve as a scaffold for the association with catalytic subunits and accessory proteins or complexes. The protein is Exosome complex component MTR3 (Exosc6) of Mus musculus (Mouse).